The sequence spans 732 residues: 1,4-alpha-glucan branching enzyme GlgB 1 (732 aa).

Asp411 functions as the Nucleophile in the catalytic mechanism. Glu464 (proton donor) is an active-site residue.

This sequence belongs to the glycosyl hydrolase 13 family. GlgB subfamily. Monomer.

It catalyses the reaction Transfers a segment of a (1-&gt;4)-alpha-D-glucan chain to a primary hydroxy group in a similar glucan chain.. Its pathway is glycan biosynthesis; glycogen biosynthesis. Its function is as follows. Catalyzes the formation of the alpha-1,6-glucosidic linkages in glycogen by scission of a 1,4-alpha-linked oligosaccharide from growing alpha-1,4-glucan chains and the subsequent attachment of the oligosaccharide to the alpha-1,6 position. The polypeptide is 1,4-alpha-glucan branching enzyme GlgB 1 (Xanthomonas oryzae pv. oryzae (strain KACC10331 / KXO85)).